Consider the following 96-residue polypeptide: ATP synthase subunit e, mitochondrial (96 aa).

Position 2 is an N-acetylserine (serine 2).

The protein belongs to the ATPase e subunit family. F-type ATPases have 2 components, CF(1) - the catalytic core - and CF(0) - the membrane proton channel. In yeast, the dimeric form of ATP synthase consists of 17 polypeptides: alpha, beta, gamma, delta, epsilon, 4 (B), 5 (OSCP), 6 (A), 8, 9 (C), d, E (Tim11), f, g, h, i/j and k.

Its subcellular location is the mitochondrion. It is found in the mitochondrion inner membrane. Its function is as follows. Mitochondrial membrane ATP synthase (F(1)F(0) ATP synthase or Complex V) produces ATP from ADP in the presence of a proton gradient across the membrane which is generated by electron transport complexes of the respiratory chain. F-type ATPases consist of two structural domains, F(1) - containing the extramembraneous catalytic core, and F(0) - containing the membrane proton channel, linked together by a central stalk and a peripheral stalk. During catalysis, ATP synthesis in the catalytic domain of F(1) is coupled via a rotary mechanism of the central stalk subunits to proton translocation. Part of the complex F(0) domain. Minor subunit located with subunit a in the membrane. This Saccharomyces cerevisiae (strain ATCC 204508 / S288c) (Baker's yeast) protein is ATP synthase subunit e, mitochondrial (TIM11).